Consider the following 321-residue polypeptide: Malate dehydrogenase (321 aa).

NAD(+)-binding positions include 10–15 and aspartate 34; that span reads GSGMIG. Substrate contacts are provided by arginine 83 and arginine 89. NAD(+) contacts are provided by residues asparagine 96 and 119–121; that span reads ITN. 2 residues coordinate substrate: asparagine 121 and arginine 152. Histidine 176 functions as the Proton acceptor in the catalytic mechanism.

It belongs to the LDH/MDH superfamily. MDH type 3 family.

It carries out the reaction (S)-malate + NAD(+) = oxaloacetate + NADH + H(+). Its function is as follows. Catalyzes the reversible oxidation of malate to oxaloacetate. This is Malate dehydrogenase from Chelativorans sp. (strain BNC1).